A 252-amino-acid polypeptide reads, in one-letter code: Imidazole glycerol phosphate synthase subunit HisF (252 aa).

Catalysis depends on residues Asp-11 and Asp-130.

Belongs to the HisA/HisF family. Heterodimer of HisH and HisF.

It is found in the cytoplasm. It carries out the reaction 5-[(5-phospho-1-deoxy-D-ribulos-1-ylimino)methylamino]-1-(5-phospho-beta-D-ribosyl)imidazole-4-carboxamide + L-glutamine = D-erythro-1-(imidazol-4-yl)glycerol 3-phosphate + 5-amino-1-(5-phospho-beta-D-ribosyl)imidazole-4-carboxamide + L-glutamate + H(+). It functions in the pathway amino-acid biosynthesis; L-histidine biosynthesis; L-histidine from 5-phospho-alpha-D-ribose 1-diphosphate: step 5/9. Its function is as follows. IGPS catalyzes the conversion of PRFAR and glutamine to IGP, AICAR and glutamate. The HisF subunit catalyzes the cyclization activity that produces IGP and AICAR from PRFAR using the ammonia provided by the HisH subunit. The polypeptide is Imidazole glycerol phosphate synthase subunit HisF (Dictyoglomus turgidum (strain DSM 6724 / Z-1310)).